The sequence spans 810 residues: Plasminogen (810 aa).

The N-terminal stretch at 1–19 is a signal peptide; the sequence is MEHKEVVLLLLLFLKSGQG. Positions 20 to 98 constitute a PAN domain; that stretch reads EPLDDYVNTQ…RDVVLFEKKV (79 aa). 12 disulfide bridges follow: Cys49-Cys73, Cys53-Cys61, Cys103-Cys181, Cys124-Cys164, Cys152-Cys176, Cys185-Cys262, Cys188-Cys316, Cys206-Cys245, Cys234-Cys257, Cys275-Cys352, Cys296-Cys335, and Cys324-Cys347. Kringle domains follow at residues 103-181 and 184-262; these read CKTG…ILEC and ECMH…IPRC. The segment at 126–145 is disordered; that stretch reads KWSSTSPHRPRFSPATHPSE. 3 residues coordinate L-lysine: Arg136, Asp158, and Arg172. Ser268 is a glycosylation site (O-linked (GalNAc...) serine). Residues 275–352 form the Kringle 3 domain; the sequence is CLKGTGENYR…RWEYCKIPSC (78 aa). Asn308 is a glycosylation site (N-linked (GlcNAc...) asparagine). Residue Thr365 is glycosylated (O-linked (GalNAc...) threonine). 9 cysteine pairs are disulfide-bonded: Cys377–Cys454, Cys398–Cys437, Cys426–Cys449, Cys481–Cys560, Cys502–Cys543, Cys531–Cys555, Cys567–Cys685, Cys577–Cys585, and Cys607–Cys623. 2 Kringle domains span residues 377 to 454 and 481 to 560; these read CYHG…LKKC and CMFG…VPQC. The disordered stretch occupies residues 396–416; sequence KKCQSWSSMTPHRHQKTPENY. L-lysine contacts are provided by Asp432 and Arg445. Residues 581–808 form the Peptidase S1 domain; sequence VVGGCVAHPH…FVTWIEGVMR (228 aa). At Ser597 the chain carries Phosphoserine. Catalysis depends on charge relay system residues His622 and Asp665. Phosphoserine is present on Ser688. 3 cysteine pairs are disulfide-bonded: Cys699–Cys766, Cys729–Cys745, and Cys756–Cys784. Ser760 functions as the Charge relay system in the catalytic mechanism.

The protein belongs to the peptidase S1 family. Plasminogen subfamily. In terms of assembly, interacts (both mature PLG and the angiostatin peptide) with CSPG4 and AMOT. Interacts (via the Kringle domains) with HRG; the interaction tethers PLG to the cell surface and enhances its activation. Interacts (via Kringle 4 domain) with ADA; the interaction stimulates PLG activation when in complex with DPP4. Angiostatin: Interacts with ATP5F1A; the interaction inhibits most of the angiogenic effects of angiostatin. Interacts (plasmin) with iripin-8, a serine protease inhibitor from Ixodes ricinus saliva. Interacts (plasmin) with iripin-1, a serine protease inhibitor from Ixodes ricinus saliva. Interacts (plasmin) with Kazal-type trypsin inhibitor, a serine protease inhibitor from Aedes aegypti. (Microbial infection) Interacts with C.albicans GPD2; the interaction is direct and provides active plasmin on the surface of fungal cells. As to quaternary structure, (Microbial infection) Interacts with Staphylococcus aureus protein FnbB; this interaction provides active plasmin on the surface of bacterial cells. In terms of assembly, (Microbial infection) Interacts with P.falciparum (strain NF54) enolase ENO (via DKSLVK motif); the interaction occurs at the ookinete cell surface and is required for ookinete invasion of the mosquito midgut. (Microbial infection) Interacts with B.burgdorferi OspC. Post-translationally, N-linked glycan contains N-acetyllactosamine and sialic acid. O-linked glycans consist of Gal-GalNAc disaccharide modified with up to 2 sialic acid residues (microheterogeneity). In the presence of the inhibitor, the activation involves only cleavage after Arg-580, yielding two chains held together by two disulfide bonds. In the absence of the inhibitor, the activation involves additionally the removal of the activation peptide. In terms of processing, (Microbial infection) The Y.pestis Pla protein cleaves between Arg-580 and Val-581, generating plasmin which facilitates bacterial migration and infection. As to expression, present in plasma and many other extracellular fluids. It is synthesized in the liver.

Its subcellular location is the secreted. The catalysed reaction is Preferential cleavage: Lys-|-Xaa &gt; Arg-|-Xaa, higher selectivity than trypsin. Converts fibrin into soluble products.. Converted into plasmin by plasminogen activators, both plasminogen and its activator being bound to fibrin. Activated with catalytic amounts of streptokinase. Plasmin activity inhibited by SERPINE2. Its function is as follows. Plasmin dissolves the fibrin of blood clots and acts as a proteolytic factor in a variety of other processes including embryonic development, tissue remodeling, tumor invasion, and inflammation. In ovulation, weakens the walls of the Graafian follicle. It activates the urokinase-type plasminogen activator, collagenases and several complement zymogens, such as C1, C4 and C5. Cleavage of fibronectin and laminin leads to cell detachment and apoptosis. Also cleaves fibrin, thrombospondin and von Willebrand factor. Its role in tissue remodeling and tumor invasion may be modulated by CSPG4. Binds to cells. Functionally, angiostatin is an angiogenesis inhibitor that blocks neovascularization and growth of experimental primary and metastatic tumors in vivo. (Microbial infection) ENO/enoloase from parasite P.falciparum (strain NF54) interacts with PLG present in the mosquito blood meal to promote the invasion of the mosquito midgut by the parasite ookinete. The catalytic active form, plasmin, is essential for the invasion of the mosquito midgut. In terms of biological role, (Microbial infection) Binds to OspC on the surface of B.burgdorferi cells, possibly conferring an extracellular protease activity on the bacteria that allows it to traverse host tissue. Its function is as follows. (Microbial infection) Interacts with dengue virus type 2 particles. Enhances dengue virus type 2 infection in Aedes aegypti mosquito midgut by increasing midgut internalization, resulting in higher infection rates and viral dissemination in mosquitoes. The polypeptide is Plasminogen (PLG) (Homo sapiens (Human)).